A 567-amino-acid polypeptide reads, in one-letter code: R-linalool synthase QH1, chloroplastic (567 aa).

Residues 1 to 24 (GNAYMRIYSTKTTRITANATVNAA) constitute a chloroplast transit peptide. Positions 282, 319, 323, 460, and 463 each coordinate (2E)-geranyl diphosphate. Mg(2+) is bound by residues Asp-319 and Asp-323. The short motif at 319–323 (DDVYD) is the DDXXD motif element. Asp-463, Thr-467, and Glu-471 together coordinate Mg(2+).

It belongs to the terpene synthase family. Tpsb subfamily. Mg(2+) is required as a cofactor. In terms of tissue distribution, highly expressed in leaves and lower levels in inflorescences. Not detected in stems, stem epidermis, stem stele or roots.

It localises to the plastid. The protein resides in the chloroplast. It carries out the reaction (2E)-geranyl diphosphate + H2O = (R)-linalool + diphosphate. The protein operates within secondary metabolite biosynthesis; terpenoid biosynthesis. In terms of biological role, monoterpene synthase that catalyzes the formation of (3R)-linalool from geranyl diphosphate, but not from isopentenyl diphosphate, dimethylallyl diphosphate, chrysanthemyl diphosphate, farnesyl diphosphate, (+)-copalyl diphosphate or geranylgeranyl diphosphate. The chain is R-linalool synthase QH1, chloroplastic (QH1) from Artemisia annua (Sweet wormwood).